The chain runs to 218 residues: 3,4-dihydroxy-2-butanone 4-phosphate synthase (218 aa).

D-ribulose 5-phosphate contacts are provided by residues 38–39 (RE), aspartate 43, 151–155 (RRGHT), and glutamate 175. Glutamate 39 is a binding site for Mg(2+). Histidine 154 is a Mg(2+) binding site.

It belongs to the DHBP synthase family. In terms of assembly, homodimer. Mg(2+) is required as a cofactor. It depends on Mn(2+) as a cofactor.

It catalyses the reaction D-ribulose 5-phosphate = (2S)-2-hydroxy-3-oxobutyl phosphate + formate + H(+). It functions in the pathway cofactor biosynthesis; riboflavin biosynthesis; 2-hydroxy-3-oxobutyl phosphate from D-ribulose 5-phosphate: step 1/1. Functionally, catalyzes the conversion of D-ribulose 5-phosphate to formate and 3,4-dihydroxy-2-butanone 4-phosphate. In Shewanella frigidimarina (strain NCIMB 400), this protein is 3,4-dihydroxy-2-butanone 4-phosphate synthase.